Here is a 291-residue protein sequence, read N- to C-terminus: Potassium-transporting ATPase subunit beta (291 aa).

Residues 1–36 (MAALQEKKTCGQRMEEFQRYCWNPDTGQMLGRTLSR) are Cytoplasmic-facing. The chain crosses the membrane as a helical; Signal-anchor for type II membrane protein span at residues 37-57 (WVWISLYYVAFYVVMTGLFAL). The Extracellular segment spans residues 58–291 (CLYVLMQTVD…KVEFKLKIEK (234 aa)). 5 N-linked (GlcNAc...) asparagine glycosylation sites follow: asparagine 99, asparagine 103, asparagine 130, asparagine 146, and asparagine 161. A disulfide bond links cysteine 131 and cysteine 152. A disulfide bond links cysteine 162 and cysteine 178. 2 N-linked (GlcNAc...) asparagine glycosylation sites follow: asparagine 193 and asparagine 222. Positions 194–291 (GSAPRVDCAF…KVEFKLKIEK (98 aa)) are immunoglobulin-like. A disulfide bond links cysteine 201 and cysteine 263.

This sequence belongs to the X(+)/potassium ATPases subunit beta family. In terms of assembly, the ATPase pump is composed of two subunits: alpha (catalytic) and beta (regulatory). Interacts with alpha subunit ATP12A; this interaction is required for the formation of a functionally active pump and targeting at the plasma membrane. Interacts (via N-terminus) with alpha subunit ATP4A (via the P-domain). Post-translationally, N-glycosylation is necessary for assembly and functional expression of the pump at the plasma membrane.

The protein localises to the apical cell membrane. The protein resides in the cell membrane. In terms of biological role, the beta subunit of the gastric H(+)/K(+) ATPase pump which transports H(+) ions in exchange for K(+) ions across the apical membrane of parietal cells. Plays a structural and regulatory role in the assembly and membrane targeting of a functionally active pump. Within a transport cycle, the transfer of a H(+) ion across the membrane is coupled to ATP hydrolysis and is associated with a transient phosphorylation of the alpha subunit that shifts the pump conformation from inward-facing (E1) to outward-facing state (E2). Interacts with the phosphorylation domain of the alpha subunit and functions as a ratchet, stabilizing the lumenal-open E2 conformation and preventing the reverse reaction of the transport cycle. The polypeptide is Potassium-transporting ATPase subunit beta (Homo sapiens (Human)).